The sequence spans 368 residues: MAKRDYYEVLGVSKTASDDEIKKAYRKLAMKYHPDRNPDNAEAEDKFKEASEAYEVLSDSEKRSMYDRMGHNAFEGGGGGGFGGFSAEDIFSQFGDIFGGAFGGGGRQQQRQRRGSDLRYVMELSLEEAVRGVKKTITFTAPAPCEVCDGKGSKNPNDVETCRTCHGTGQVRMQQGFFSVQQTCGTCRGQGKIIKNPCQSCHGSGVADRQQTLEVTIPAGVDNGDRVRLSGKGEAVRDGQAGDLYVEVVVREHEIFQRDGADLYMDVPVSIADAALGKEIEIPTLEGRVSLKIPEGTQTGKLFRLRGKGVRPVRSSMVGDLLCRVVVETPVNLTSRQRELFKELQATLDGDEHSSSPKKKSFFDRLFD.

The 66-residue stretch at 5–70 (DYYEVLGVSK…EKRSMYDRMG (66 aa)) folds into the J domain. The CR-type zinc-finger motif lies at 132–210 (GVKKTITFTA…CHGSGVADRQ (79 aa)). Zn(2+)-binding residues include C145, C148, C162, C165, C184, C187, C198, and C201. 4 CXXCXGXG motif repeats span residues 145-152 (CEVCDGKG), 162-169 (CRTCHGTG), 184-191 (CGTCRGQG), and 198-205 (CQSCHGSG). The tract at residues 349–368 (DGDEHSSSPKKKSFFDRLFD) is disordered. Over residues 350–368 (GDEHSSSPKKKSFFDRLFD) the composition is skewed to basic and acidic residues.

Belongs to the DnaJ family. As to quaternary structure, homodimer. Requires Zn(2+) as cofactor.

The protein resides in the cytoplasm. Functionally, participates actively in the response to hyperosmotic and heat shock by preventing the aggregation of stress-denatured proteins and by disaggregating proteins, also in an autonomous, DnaK-independent fashion. Unfolded proteins bind initially to DnaJ; upon interaction with the DnaJ-bound protein, DnaK hydrolyzes its bound ATP, resulting in the formation of a stable complex. GrpE releases ADP from DnaK; ATP binding to DnaK triggers the release of the substrate protein, thus completing the reaction cycle. Several rounds of ATP-dependent interactions between DnaJ, DnaK and GrpE are required for fully efficient folding. Also involved, together with DnaK and GrpE, in the DNA replication of plasmids through activation of initiation proteins. This chain is Chaperone protein DnaJ, found in Acinetobacter baylyi (strain ATCC 33305 / BD413 / ADP1).